The primary structure comprises 839 residues: Katanin p80 WD40 repeat-containing subunit B1 homolog KTN80.3 (839 aa).

WD repeat units follow at residues 14–54 (AHSA…AILS), 57–96 (GHSS…VVRT), 99–138 (GHRS…CIHT), 141–182 (GHTR…HEFK), 184–222 (HEGK…LIGS), 225–265 (TETT…DGVD), and 267–304 (GWSN…TEPM). Residues 115–131 (FFASGSLDTNLKIWDIR) carry the DWD box motif. 4 disordered regions span residues 303-340 (PMSG…LGKL), 357-435 (GKLS…KSAS), 501-561 (LQSK…RTNK), and 575-648 (SLVR…PSNM). Polar residues-rich tracts occupy residues 307 to 334 (GATQ…NSSK), 375 to 385 (TGRSSVSQSSD), 411 to 435 (TLSS…KSAS), 501 to 533 (LQSK…QSQP), 589 to 602 (DLIS…SSPT), and 630 to 648 (VSSS…PSNM).

The protein belongs to the WD repeat KATNB1 family. Component of KTN80-KTN1 complexes composed of a hexamer of KTN1-KTN80 heterodimers that sense microtubule (MT) geometry to confer precise MT severing. Interacts directly with AAA1/KTN1 and KTN80.1, and weakly with KTN80.4. As to expression, expressed in siliques, flowers, leaves, stems and roots.

Its subcellular location is the cytoplasm. It is found in the cytoskeleton. Its function is as follows. May participate in a complex which severs microtubules in an ATP-dependent manner. Microtubule severing may promote rapid reorganization of cellular microtubule arrays. Confers precision to microtubule (MT) severing by specific targeting of KTN1 to MT cleavage sites such as crossover or branching nucleation sites. Together with other KTN80s, regulates cell elongation by modulating MT organization. This is Katanin p80 WD40 repeat-containing subunit B1 homolog KTN80.3 from Arabidopsis thaliana (Mouse-ear cress).